Consider the following 485-residue polypeptide: MSLFDHSVSELHKKLNNKEISVTDLVEESYKRIADVEDNVKAFLTLDEENARAKAKELDAKIGAEDNGLLFGMPIGVKDNIVTNGLRTTCASKMLANFDPIYDATVVQKLKAADTITIGKLNMDEFAMGSSNENSGFYATKNPWNLDYVPGGSSGGSAAAVAAGEVLFSLGSDTGGSIRQPAAYCGVVGLKPTYGRVSRYGLVAFASSLDQIGPITRTVEDNAYLLQAISGLDRMDATSANVEVGNYLAGLTGDVKGLRIAVPKEYLGEGVGEEARESVLAALKVLEGMGATWEEVSLPHSKYALATYYLLSSSEASANLSRFDGVRYGVRSDNVNNLMDLYKNTRSEGFGDEVKRRIMLGTFALSSGYYDAYYKKAQQVRTLIKNDFENVFANYDVIIGPTTPTPAFKVGEKVDDPMTMYANDILTIPVNLAGVPAISVPCGFGANNMPLGLQIIGKHFDEATIYRVAHAFEQATDYHTKKASL.

Active-site charge relay system residues include lysine 78 and serine 153. Catalysis depends on serine 177, which acts as the Acyl-ester intermediate.

It belongs to the amidase family. GatA subfamily. Heterotrimer of A, B and C subunits.

It carries out the reaction L-glutamyl-tRNA(Gln) + L-glutamine + ATP + H2O = L-glutaminyl-tRNA(Gln) + L-glutamate + ADP + phosphate + H(+). In terms of biological role, allows the formation of correctly charged Gln-tRNA(Gln) through the transamidation of misacylated Glu-tRNA(Gln) in organisms which lack glutaminyl-tRNA synthetase. The reaction takes place in the presence of glutamine and ATP through an activated gamma-phospho-Glu-tRNA(Gln). This Bacillus cereus (strain ZK / E33L) protein is Glutamyl-tRNA(Gln) amidotransferase subunit A.